We begin with the raw amino-acid sequence, 472 residues long: tRNA modification GTPase MnmE (472 aa).

(6S)-5-formyl-5,6,7,8-tetrahydrofolate is bound by residues arginine 28, glutamate 91, and lysine 130. Positions 225–391 constitute a TrmE-type G domain; it reads GAKVVLAGKT…LSEKAYSVLA (167 aa). Asparagine 235 contributes to the K(+) binding site. GTP-binding positions include 235-240, 254-260, and 279-282; these read NAGKSS, SDIHGTT, and DTAG. Position 239 (serine 239) interacts with Mg(2+). K(+)-binding residues include serine 254, isoleucine 256, and threonine 259. Threonine 260 provides a ligand contact to Mg(2+). Lysine 472 provides a ligand contact to (6S)-5-formyl-5,6,7,8-tetrahydrofolate.

The protein belongs to the TRAFAC class TrmE-Era-EngA-EngB-Septin-like GTPase superfamily. TrmE GTPase family. As to quaternary structure, homodimer. Heterotetramer of two MnmE and two MnmG subunits. It depends on K(+) as a cofactor.

Its subcellular location is the cytoplasm. Exhibits a very high intrinsic GTPase hydrolysis rate. Involved in the addition of a carboxymethylaminomethyl (cmnm) group at the wobble position (U34) of certain tRNAs, forming tRNA-cmnm(5)s(2)U34. The protein is tRNA modification GTPase MnmE of Treponema denticola (strain ATCC 35405 / DSM 14222 / CIP 103919 / JCM 8153 / KCTC 15104).